The chain runs to 314 residues: Putative peptide transport system permease protein BRA1092/BS1330_II1084 (314 aa).

The next 6 helical transmembrane spans lie at 12–32 (AIPVMLIVAILTFLLMKLLPG), 101–121 (LALLAFAITIPVGIIMGVVAA), 135–155 (LALLGVSVPSFWLAILAVILF), 177–197 (WLRSLILPASILALFQIGYLA), 237–257 (VSVLTVSGYIFSLLIGGSVVI), and 286–306 (MLFLGFLFVAINVLVDILYTI). The ABC transmembrane type-1 domain maps to 95–304 (LPVTISLALL…AINVLVDILY (210 aa)).

This sequence belongs to the binding-protein-dependent transport system permease family. As to quaternary structure, the complex is composed of two ATP-binding proteins (BRA1094), two transmembrane proteins (BRA1092 and BRA1093) and a solute-binding protein (BRA1090).

The protein localises to the cell inner membrane. Functionally, probably part of an ABC transporter complex that could be involved in peptide import. Probably responsible for the translocation of the substrate across the membrane. This chain is Putative peptide transport system permease protein BRA1092/BS1330_II1084, found in Brucella suis biovar 1 (strain 1330).